A 474-amino-acid chain; its full sequence is Chromosomal replication initiator protein DnaA (474 aa).

The interval 1–90 (MSSSLWLQCL…RQVVVPSSQI (90 aa)) is domain I, interacts with DnaA modulators. Residues 91 to 137 (IAPAAPAVTLAPRPLPATRILQDDAPSRSWEPAPSPVQPESKSGYRS) are domain II. Residues 112-137 (QDDAPSRSWEPAPSPVQPESKSGYRS) are disordered. Polar residues predominate over residues 128 to 137 (QPESKSGYRS). A domain III, AAA+ region region spans residues 138 to 354 (NVNPKHNFNN…GALNRVIANA (217 aa)). 4 residues coordinate ATP: Gly182, Gly184, Lys185, and Thr186. The tract at residues 355–474 (NFTGRAITID…YSNLIRTLST (120 aa)) is domain IV, binds dsDNA.

This sequence belongs to the DnaA family. Oligomerizes as a right-handed, spiral filament on DNA at oriC.

It is found in the cytoplasm. In terms of biological role, plays an essential role in the initiation and regulation of chromosomal replication. ATP-DnaA binds to the origin of replication (oriC) to initiate formation of the DNA replication initiation complex once per cell cycle. Binds the DnaA box (a 9 base pair repeat at the origin) and separates the double-stranded (ds)DNA. Forms a right-handed helical filament on oriC DNA; dsDNA binds to the exterior of the filament while single-stranded (ss)DNA is stabiized in the filament's interior. The ATP-DnaA-oriC complex binds and stabilizes one strand of the AT-rich DNA unwinding element (DUE), permitting loading of DNA polymerase. After initiation quickly degrades to an ADP-DnaA complex that is not apt for DNA replication. Binds acidic phospholipids. This chain is Chromosomal replication initiator protein DnaA, found in Photobacterium profundum (strain SS9).